The sequence spans 445 residues: 4-hydroxyphenylpyruvate dioxygenase (445 aa).

Residues 1-11 are compositionally biased toward polar residues; that stretch reads MGHQNAAVSEN. Positions 1 to 20 are disordered; that stretch reads MGHQNAAVSENQNHDDGAAS. VOC domains follow at residues 46–192 and 223–383; these read RFHH…YVSY and RLDH…IFTK. Positions 226, 308, and 394 each coordinate Fe cation.

This sequence belongs to the 4HPPD family. As to quaternary structure, homodimer. The cofactor is Fe cation.

The protein localises to the cytoplasm. The catalysed reaction is 3-(4-hydroxyphenyl)pyruvate + O2 = homogentisate + CO2. It participates in amino-acid degradation; L-phenylalanine degradation; acetoacetate and fumarate from L-phenylalanine: step 3/6. Its pathway is cofactor biosynthesis; prenylquinone biosynthesis. In terms of biological role, catalyzes the conversion of 4-hydroxyphenylpyruvic acid to homogentisic acid, one of the steps in tyrosine catabolism. The chain is 4-hydroxyphenylpyruvate dioxygenase (HPD) from Arabidopsis thaliana (Mouse-ear cress).